Reading from the N-terminus, the 131-residue chain is Small ribosomal subunit protein uS8 (131 aa).

The protein belongs to the universal ribosomal protein uS8 family. As to quaternary structure, part of the 30S ribosomal subunit. Contacts proteins S5 and S12.

Its function is as follows. One of the primary rRNA binding proteins, it binds directly to 16S rRNA central domain where it helps coordinate assembly of the platform of the 30S subunit. This Halorhodospira halophila (strain DSM 244 / SL1) (Ectothiorhodospira halophila (strain DSM 244 / SL1)) protein is Small ribosomal subunit protein uS8.